The primary structure comprises 92 residues: Small ribosomal subunit protein uS19 (92 aa).

A disordered region spans residues 72–92 (GEFSPTRSFRGHAGAKNKGKK). Residues 80–92 (FRGHAGAKNKGKK) are compositionally biased toward basic residues.

The protein belongs to the universal ribosomal protein uS19 family.

Functionally, protein S19 forms a complex with S13 that binds strongly to the 16S ribosomal RNA. The chain is Small ribosomal subunit protein uS19 from Flavobacterium johnsoniae (strain ATCC 17061 / DSM 2064 / JCM 8514 / BCRC 14874 / CCUG 350202 / NBRC 14942 / NCIMB 11054 / UW101) (Cytophaga johnsonae).